Here is a 274-residue protein sequence, read N- to C-terminus: 2,3,4,5-tetrahydropyridine-2,6-dicarboxylate N-succinyltransferase (274 aa).

R104 and D141 together coordinate substrate.

It belongs to the transferase hexapeptide repeat family. Homotrimer.

Its subcellular location is the cytoplasm. It catalyses the reaction (S)-2,3,4,5-tetrahydrodipicolinate + succinyl-CoA + H2O = (S)-2-succinylamino-6-oxoheptanedioate + CoA. It participates in amino-acid biosynthesis; L-lysine biosynthesis via DAP pathway; LL-2,6-diaminopimelate from (S)-tetrahydrodipicolinate (succinylase route): step 1/3. This is 2,3,4,5-tetrahydropyridine-2,6-dicarboxylate N-succinyltransferase from Salmonella arizonae (strain ATCC BAA-731 / CDC346-86 / RSK2980).